The primary structure comprises 758 residues: 5-methyltetrahydropteroyltriglutamate--homocysteine methyltransferase (758 aa).

5-methyltetrahydropteroyltri-L-glutamate is bound by residues 17-20 (RELK) and Lys117. L-homocysteine is bound by residues 434 to 436 (IGS) and Glu487. L-methionine is bound by residues 434-436 (IGS) and Glu487. Residues 518–519 (RC) and Trp564 each bind 5-methyltetrahydropteroyltri-L-glutamate. Asp602 is an L-homocysteine binding site. Asp602 is an L-methionine binding site. Position 608 (Glu608) interacts with 5-methyltetrahydropteroyltri-L-glutamate. Zn(2+) is bound by residues His644, Cys646, and Glu668. The Proton donor role is filled by His697. Position 729 (Cys729) interacts with Zn(2+).

This sequence belongs to the vitamin-B12 independent methionine synthase family. It depends on Zn(2+) as a cofactor.

It carries out the reaction 5-methyltetrahydropteroyltri-L-glutamate + L-homocysteine = tetrahydropteroyltri-L-glutamate + L-methionine. Its pathway is amino-acid biosynthesis; L-methionine biosynthesis via de novo pathway; L-methionine from L-homocysteine (MetE route): step 1/1. Its function is as follows. Catalyzes the transfer of a methyl group from 5-methyltetrahydrofolate to homocysteine resulting in methionine formation. In Yersinia pseudotuberculosis serotype O:1b (strain IP 31758), this protein is 5-methyltetrahydropteroyltriglutamate--homocysteine methyltransferase.